The sequence spans 720 residues: Glycine--tRNA ligase beta subunit (720 aa).

Belongs to the class-II aminoacyl-tRNA synthetase family. In terms of assembly, tetramer of two alpha and two beta subunits.

It is found in the cytoplasm. The enzyme catalyses tRNA(Gly) + glycine + ATP = glycyl-tRNA(Gly) + AMP + diphosphate. This chain is Glycine--tRNA ligase beta subunit, found in Acidovorax ebreus (strain TPSY) (Diaphorobacter sp. (strain TPSY)).